The sequence spans 257 residues: Phycoerythrobilin:ferredoxin oxidoreductase (257 aa).

The protein belongs to the HY2 family.

The enzyme catalyses (3Z)-phycoerythrobilin + oxidized 2[4Fe-4S]-[ferredoxin] = 15,16-dihydrobiliverdin + reduced 2[4Fe-4S]-[ferredoxin] + 2 H(+). Catalyzes the two-electron reduction of the C2 and C3(1) diene system of 15,16-dihydrobiliverdin. This Prochlorococcus marinus subsp. pastoris (strain CCMP1986 / NIES-2087 / MED4) protein is Phycoerythrobilin:ferredoxin oxidoreductase (pebB).